The primary structure comprises 451 residues: UBP1-associated protein 2B (451 aa).

The interval 1 to 86 (MTKKRKLESE…GNEDDDEEEP (86 aa)) is disordered. Basic and acidic residues-rich tracts occupy residues 25–38 (CEKEDPEIRNVDNQ) and 49–63 (DTLKEMHEEEAKGED). Polar residues predominate over residues 67–77 (AETSSGSGNQG). 2 RRM domains span residues 128–236 (RKIF…NVSA) and 227–314 (RKIY…QHQH). Disordered regions lie at residues 302–335 (ANDGPKQVKQHQHNHNSHNQNSRYQRNDNNGYGA) and 423–451 (GGYQTQQPGQGGAGRGQHGAGYGGPYMGR). Residues 431-451 (GQGGAGRGQHGAGYGGPYMGR) show a composition bias toward gly residues.

Expressed in shoot meristem and flowers.

It localises to the nucleus. Functionally, heterogeneous nuclear ribonucleoprotein (hnRNP)-like protein that acts as a component of a complex regulating the turnover of mRNAs in the nucleus. Binds with high affinity to RNA molecules that contain U-rich sequences in 3'-UTRs. May function in complex with UBP1 and contribute to the stabilization of mRNAs in the nucleus. This is UBP1-associated protein 2B (UBA2B) from Arabidopsis thaliana (Mouse-ear cress).